The following is a 304-amino-acid chain: uncharacterized protein (304 aa).

NAD(+)-binding positions include 136–137 (GI), 215–217 (VGR), and D241. Residue R217 is part of the active site. E246 is an active-site residue. The Proton donor role is filled by H265. Position 265–268 (265–268 (HTAN)) interacts with NAD(+).

This sequence belongs to the D-isomer specific 2-hydroxyacid dehydrogenase family.

This is an uncharacterized protein from Corynebacterium melassecola.